The primary structure comprises 758 residues: Spastin (758 aa).

The interval 1–99 (MVRTKNQSSS…PTTCSPRSGH (99 aa)) is disordered. Topologically, residues 1–121 (MVRTKNQSSS…KQNLYVVSFP (121 aa)) are cytoplasmic. The tract at residues 1-210 (MVRTKNQSSS…RPIQPLEMAA (210 aa)) is required for localization to punctate cytoplasmic foci. 4 stretches are compositionally biased toward low complexity: residues 8–28 (SSSSSASSSSTKSPIKSSSGA), 43–58 (RSSSASNVAAVVAGGS), 66–76 (SSNRRSPGSSP), and 85–95 (TDDLTPTTCSP). An intramembrane region (helical) is located at residues 122 to 142 (IIFLFNVLRSLIYQLFCIFRY). Residues 143-758 (LYGASTKVIY…WSQDYGDITI (616 aa)) lie on the Cytoplasmic side of the membrane. Composition is skewed to polar residues over residues 169–180 (SKEQQQSLNHPS) and 189–198 (QEQQLSNQPQ). The tract at residues 169 to 203 (SKEQQQSLNHPSELSREGDGQEQQLSNQPQRFRPI) is disordered. The segment at 208–758 (MAANRPGGGY…WSQDYGDITI (551 aa)) is sufficient for interaction with microtubules and microtubule severing. The 76-residue stretch at 233 to 308 (HRRAFEYISK…SMARDRLHFL (76 aa)) folds into the MIT domain. Disordered regions lie at residues 353-375 (RVRSSGYGPKATTSAQPTASGRK) and 390-454 (NKSQ…ASTP). Composition is skewed to polar residues over residues 390–406 (NKSQTLPRNLGSKTSVG) and 425–454 (QFSSGRNTPPQRSRTPINNNGPSGSGASTP). A required for interaction with microtubules region spans residues 443–455 (NNGPSGSGASTPV). Position 523–530 (523–530 (GPPGNGKT)) interacts with ATP.

It belongs to the AAA ATPase family. Spastin subfamily. As to quaternary structure, homohexamer. The homohexamer is stabilized by ATP-binding. The homohexamer may adopt a ring conformation through which microtubules pass prior to being severed. Interacts with microtubules. Interacts with atl; may be involved in microtubule dynamics.

The protein localises to the membrane. The protein resides in the cytoplasm. It localises to the cytoskeleton. It is found in the microtubule organizing center. Its subcellular location is the centrosome. The protein localises to the chromosome. The protein resides in the lipid droplet. The catalysed reaction is n ATP + n H2O + a microtubule = n ADP + n phosphate + (n+1) alpha/beta tubulin heterodimers.. Functionally, ATP-dependent microtubule severing protein. Stimulates microtubule minus-end depolymerization and poleward microtubule flux in the mitotic spindle. Regulates microtubule stability in the neuromuscular junction synapse. Involved in lipid metabolism by regulating the size and distribution of lipid droplets. Involved in axon regeneration by regulating microtubule severing. The chain is Spastin from Drosophila erecta (Fruit fly).